The primary structure comprises 668 residues: Major S-layer protein (668 aa).

A signal peptide spans 1-24; the sequence is MKRFAAVTLAALMLLTVFASAASA. N-linked (GlcNAc...) asparagine glycosylation is found at asparagine 36, asparagine 65, asparagine 111, asparagine 265, asparagine 583, asparagine 596, asparagine 602, asparagine 608, asparagine 617, and asparagine 635. A disordered region spans residues 584–650; the sequence is ETTSITKPDE…ESNGSPGFGV (67 aa). Positions 596-611 are enriched in polar residues; that stretch reads NETVSDNETMPDNTSS. Acidic residues predominate over residues 631 to 641; the sequence is EPTDNETEPDE. The helical transmembrane segment at 644 to 664 threads the bilayer; that stretch reads GSPGFGVVLGLAGLLGVVYLV.

Belongs to the Methanosarcinales S-layer protein family. In terms of processing, glycosylated.

It localises to the secreted. It is found in the cell wall. Its subcellular location is the S-layer. The protein resides in the cell membrane. Its function is as follows. S-layer protein. The S-layer is a paracrystalline mono-layered assembly of proteins which coat the surface of the cell. In Methanosarcina barkeri (strain Fusaro / DSM 804), this protein is Major S-layer protein.